A 184-amino-acid chain; its full sequence is GTP-dependent dephospho-CoA kinase (184 aa).

Asp-33, Val-34, Asp-52, Lys-54, and Glu-103 together coordinate GTP.

The protein belongs to the GTP-dependent DPCK family.

The enzyme catalyses 3'-dephospho-CoA + GTP = GDP + CoA + H(+). Its pathway is cofactor biosynthesis; coenzyme A biosynthesis. Functionally, catalyzes the GTP-dependent phosphorylation of the 3'-hydroxyl group of dephosphocoenzyme A to form coenzyme A (CoA). The polypeptide is GTP-dependent dephospho-CoA kinase (Ignicoccus hospitalis (strain KIN4/I / DSM 18386 / JCM 14125)).